The chain runs to 38 residues: Large ribosomal subunit protein bL36 (38 aa).

The protein belongs to the bacterial ribosomal protein bL36 family.

In Prosthecochloris aestuarii (strain DSM 271 / SK 413), this protein is Large ribosomal subunit protein bL36.